A 478-amino-acid chain; its full sequence is NADH-quinone oxidoreductase subunit N (478 aa).

13 helical membrane-spanning segments follow: residues 7–27, 46–66, 74–94, 109–129, 163–183, 204–224, 237–257, 273–293, 300–320, 328–348, 371–391, 405–425, and 451–471; these read SFIP…LLIA, ILLV…VLTF, AFGD…FLFS, FTLG…YNLI, FVLG…IYGA, VVLS…LGAV, APTA…FAML, QSLI…ITLV, LLAY…IAAN, MFYT…IVAL, LALM…FVGF, GFTW…FYYL, and WAVS…SSLI.

This sequence belongs to the complex I subunit 2 family. NDH-1 is composed of 14 different subunits. Subunits NuoA, H, J, K, L, M, N constitute the membrane sector of the complex.

The protein resides in the cell inner membrane. It catalyses the reaction a quinone + NADH + 5 H(+)(in) = a quinol + NAD(+) + 4 H(+)(out). In terms of biological role, NDH-1 shuttles electrons from NADH, via FMN and iron-sulfur (Fe-S) centers, to quinones in the respiratory chain. The immediate electron acceptor for the enzyme in this species is believed to be ubiquinone. Couples the redox reaction to proton translocation (for every two electrons transferred, four hydrogen ions are translocated across the cytoplasmic membrane), and thus conserves the redox energy in a proton gradient. This is NADH-quinone oxidoreductase subunit N from Hydrogenovibrio crunogenus (strain DSM 25203 / XCL-2) (Thiomicrospira crunogena).